Here is a 92-residue protein sequence, read N- to C-terminus: Small ribosomal subunit protein uS19c (92 aa).

This sequence belongs to the universal ribosomal protein uS19 family.

The protein resides in the plastid. The protein localises to the chloroplast. Its function is as follows. Protein S19 forms a complex with S13 that binds strongly to the 16S ribosomal RNA. The sequence is that of Small ribosomal subunit protein uS19c from Gracilaria tenuistipitata var. liui (Red alga).